A 628-amino-acid polypeptide reads, in one-letter code: 3-hydroxy-3-methylglutaryl-coenzyme A reductase 2 (628 aa).

Helical transmembrane passes span 38–58 and 78–98; these read PLYL…YFLL and EIVA…FFGI. The segment at 99–212 is linker; it reads DFVQSLIIRP…HEKTVIVTTE (114 aa). Asparagine 153 carries an N-linked (GlcNAc...) asparagine glycan. A catalytic region spans residues 213–628; sequence EDEEIIKSVV…SSKDMSNLSS (416 aa). Glutamate 307 (charge relay system) is an active-site residue. A glycan (N-linked (GlcNAc...) asparagine) is linked at asparagine 371. The Charge relay system role is filled by lysine 439. Asparagine 484 carries N-linked (GlcNAc...) asparagine glycosylation. Aspartate 515 serves as the catalytic Charge relay system. Catalysis depends on histidine 613, which acts as the Proton donor. 2 N-linked (GlcNAc...) asparagine glycosylation sites follow: asparagine 617 and asparagine 625.

The protein belongs to the HMG-CoA reductase family.

Its subcellular location is the endoplasmic reticulum membrane. The protein localises to the mitochondrion membrane. It is found in the plastid membrane. The catalysed reaction is (R)-mevalonate + 2 NADP(+) + CoA = (3S)-3-hydroxy-3-methylglutaryl-CoA + 2 NADPH + 2 H(+). It participates in metabolic intermediate biosynthesis; (R)-mevalonate biosynthesis; (R)-mevalonate from acetyl-CoA: step 3/3. In terms of biological role, catalyzes the synthesis of mevalonate. The specific precursor of all isoprenoid compounds present in plants. In Gossypium hirsutum (Upland cotton), this protein is 3-hydroxy-3-methylglutaryl-coenzyme A reductase 2 (HMG2).